The chain runs to 179 residues: Apolipophorin-3b (179 aa).

The first 16 residues, 1-16 (MNTLLAVLMLAVAAQA), serve as a signal peptide directing secretion. 12 consecutive repeats follow at residues 30–40 (VQQLNHTIVNA), 41–52 (AHELHETLGLPT), 53–60 (PDEALNLL), 61–78 (TEQA…TTSL), 79–89 (KQEAEKHQGSV), 90–99 (AEQLNRFARN), 100–113 (LNNS…SAQP), 114–127 (ADQL…LTNV), 128–140 (GHQW…RPSV), 141–151 (AQEAWAPVQSA), 152–165 (LQEA…AAAN), and 166–179 (LQNS…KPAN). Residue Asn-34 is glycosylated (N-linked (GlcNAc...) asparagine). Residue Asn-101 is glycosylated (N-linked (GlcNAc...) asparagine). Residues 152 to 179 (LQEAAEKTKEAAANLQNSIQSAVQKPAN) are disordered. Polar residues predominate over residues 165-179 (NLQNSIQSAVQKPAN).

The protein belongs to the insect apolipophorin-3 family. As to quaternary structure, equilibrium between a soluble monomer and a bound lipoprotein form. Apolipophorin-3 associates with lipophorin during lipid loading until each particle contains 14 molecules of apolipophorin-3 in L.migratoria (5 molecules of apolipophorin-3a and 9 of apolipophorin-3b). In terms of tissue distribution, hemolymph.

It is found in the secreted. In terms of biological role, assists in the loading of diacylglycerol, generated from triacylglycerol stores in the fat body through the action of adipokinetic hormone, into lipophorin, the hemolymph lipoprotein. It increases the lipid carrying capacity of lipophorin by covering the expanding hydrophobic surface resulting from diacylglycerol uptake. It thus plays a critical role in the transport of lipids during flight in several species of insects. The polypeptide is Apolipophorin-3b (Locusta migratoria (Migratory locust)).